We begin with the raw amino-acid sequence, 328 residues long: Probable E3 ubiquitin-protein ligase RHC1A (328 aa).

Serine 2 bears the N-acetylserine mark. An RING-type; atypical zinc finger spans residues 190–231 (CPVCKDEFELGSEAKQMPCNHIYHSDCIVPWLVQHNSCPVCR). A disordered region spans residues 233-324 (ELPSASGPSS…QQSYMGYSGW (92 aa)). Residues 238-250 (SGPSSSQNRTTPT) are compositionally biased toward polar residues. Low complexity-rich tracts occupy residues 251–266 (RNYR…NSRE) and 275–290 (FSSF…SSSS). Polar residues predominate over residues 291-300 (TQNRGGTRNS).

It carries out the reaction S-ubiquitinyl-[E2 ubiquitin-conjugating enzyme]-L-cysteine + [acceptor protein]-L-lysine = [E2 ubiquitin-conjugating enzyme]-L-cysteine + N(6)-ubiquitinyl-[acceptor protein]-L-lysine.. It participates in protein modification; protein ubiquitination. Functionally, probable E3 ubiquitin-protein ligase that may possess E3 ubiquitin ligase activity in vitro. The protein is Probable E3 ubiquitin-protein ligase RHC1A of Arabidopsis thaliana (Mouse-ear cress).